The sequence spans 83 residues: Putative defensin-like protein 67 (83 aa).

An N-terminal signal peptide occupies residues Met1–Ser24. Disulfide bonds link Cys38-Cys82, Cys42-Cys65, Cys51-Cys80, and Cys55-Cys81.

The protein belongs to the DEFL family.

The protein resides in the secreted. This Arabidopsis thaliana (Mouse-ear cress) protein is Putative defensin-like protein 67.